Here is a 462-residue protein sequence, read N- to C-terminus: Violaxanthin de-epoxidase, chloroplastic (462 aa).

A disulfide bond links Cys-231 and Cys-362. The stretch at 372–437 (IEKTVEEGER…RELSKEEMEF (66 aa)) forms a coiled coil. Residues 380–391 (ERIIVKEVEEIE) are involved in the binding to the thylakoid membrane.

Belongs to the calycin superfamily. Lipocalin family. In terms of assembly, interacts in vitro with LTO1.

The protein localises to the plastid. It localises to the chloroplast thylakoid membrane. The catalysed reaction is all-trans-violaxanthin + 2 L-ascorbate = all-trans-zeaxanthin + 2 L-dehydroascorbate + 2 H2O. With respect to regulation, activity limited by low ascorbate availability. Feedback inhibition by zeaxanthin. Requires the presence of micelle-forming lipids such as monogalactosyldiacylglyceride (MGDG). Low concentration of bilayer forming lipids, such as digalactosyldiacylglyceride (DGDG) or phosphatidylcholine, supports a slower but nearly complete activity. 80% of the specific activity in lumenal chloroplast fractions is lost in vitro in the presence of reduced thioredoxin. Functionally, part of the xanthophyll (or violaxanthin) cycle for controlling the concentration of zeaxanthin in chloroplasts. Catalyzes the two-step mono de-epoxidation reaction. Stereospecific for all-trans xanthophylls. Zeaxanthin induces the dissipation of excitation energy in the chlorophyll of the light-harvesting protein complex of photosystem II. This Arabidopsis thaliana (Mouse-ear cress) protein is Violaxanthin de-epoxidase, chloroplastic.